Here is a 114-residue protein sequence, read N- to C-terminus: uncharacterized protein (114 aa).

The protein to M.jannaschii MJ0310 and MJ0714.

This is an uncharacterized protein from Methanocaldococcus jannaschii (strain ATCC 43067 / DSM 2661 / JAL-1 / JCM 10045 / NBRC 100440) (Methanococcus jannaschii).